The chain runs to 125 residues: uncharacterized protein (125 aa).

This is an uncharacterized protein from Bacillus subtilis (strain 168).